The primary structure comprises 199 residues: Recombination protein RecR (199 aa).

The C4-type zinc finger occupies 58–73; the sequence is CQRCNNFSEEAVCQRC. The region spanning 81 to 176 is the Toprim domain; the sequence is ATLCVVEMPA…KVSRISRGVP (96 aa).

The protein belongs to the RecR family.

Its function is as follows. May play a role in DNA repair. It seems to be involved in an RecBC-independent recombinational process of DNA repair. It may act with RecF and RecO. The protein is Recombination protein RecR of Azoarcus sp. (strain BH72).